The chain runs to 124 residues: MKSIGCDIIKVERFKNFLENKKKMERFFTHKEIENFKLKGGSIIESLAGKFAAKESLIKALSPLLQYKINYTLKDIEVIKSLKGNAEFCLHNEVEKFAIKMNLKLYLTISHEKEYAIAFVIVEN.

Mg(2+)-binding residues include Asp-7 and Glu-55.

This sequence belongs to the P-Pant transferase superfamily. AcpS family. Requires Mg(2+) as cofactor.

It localises to the cytoplasm. It catalyses the reaction apo-[ACP] + CoA = holo-[ACP] + adenosine 3',5'-bisphosphate + H(+). Functionally, transfers the 4'-phosphopantetheine moiety from coenzyme A to a Ser of acyl-carrier-protein. The polypeptide is Holo-[acyl-carrier-protein] synthase (Borreliella burgdorferi (strain ATCC 35210 / DSM 4680 / CIP 102532 / B31) (Borrelia burgdorferi)).